The chain runs to 415 residues: Tumor necrosis factor receptor superfamily member 3 (415 aa).

An N-terminal signal peptide occupies residues 1–30 (MRLPRASSPCGLAWGPLLLGLSGLLVASQP). At 31–223 (QLVPPYRIEN…NPPEPGAMLL (193 aa)) the chain is on the extracellular side. N-linked (GlcNAc...) asparagine glycosylation occurs at Asn-40. 4 TNFR-Cys repeats span residues 42-81 (TCWD…TVCK), 82-124 (TCPH…KAEC), 125-170 (RCQP…VNCV), and 171-213 (PCKP…TICK). Disulfide bonds link Cys-43-Cys-58, Cys-59-Cys-72, Cys-62-Cys-80, Cys-83-Cys-98, Cys-101-Cys-116, Cys-104-Cys-124, Cys-126-Cys-132, Cys-139-Cys-150, Cys-142-Cys-169, and Cys-172-Cys-187. The N-linked (GlcNAc...) asparagine glycan is linked to Asn-179. A helical transmembrane segment spans residues 224–244 (LAILLSLVLFLLFTTVLACAW). The Cytoplasmic portion of the chain corresponds to 245–415 (MRHPSLCRKL…ETETLGCQDL (171 aa)). Residues 261-304 (HPEGEESPPCPAPRADPHFPDLAEPLLPMSGDLSPSPAGPPTAP) form a disordered region. Ser-315 bears the Phosphoserine mark. Residues 361 to 399 (LGGTRGPGDPPAPPEPPYPTPEEGAPGPSELSTPYQEDG) are disordered. Over residues 368-380 (GDPPAPPEPPYPT) the composition is skewed to pro residues.

In terms of assembly, self-associates; dimerization and trimerization are promoted by lymphotoxin (LTA(3)). Associates with TRAF3. Associates with TRAF4. Associates with TRAF5.

It is found in the membrane. In terms of biological role, receptor for the heterotrimeric lymphotoxin containing LTA and LTB, and for TNFS14/LIGHT. Activates NF-kappa-B signaling upon stimulation with lymphotoxin. Promotes apoptosis via TRAF3 and TRAF5. May play a role in the development of lymphoid organs. Its function is as follows. (Microbial infection) Plays a role in host defense against Zika virus infection. The chain is Tumor necrosis factor receptor superfamily member 3 (Ltbr) from Mus musculus (Mouse).